The following is a 92-amino-acid chain: Small ribosomal subunit protein uS19 (92 aa).

This sequence belongs to the universal ribosomal protein uS19 family.

Its function is as follows. Protein S19 forms a complex with S13 that binds strongly to the 16S ribosomal RNA. In Chelativorans sp. (strain BNC1), this protein is Small ribosomal subunit protein uS19.